The sequence spans 272 residues: Shikimate dehydrogenase (NADP(+)) (272 aa).

Shikimate-binding positions include 14-16 (SKS) and threonine 61. The Proton acceptor role is filled by lysine 65. Position 77 (glutamate 77) interacts with NADP(+). Asparagine 86 and aspartate 102 together coordinate shikimate. Residues 126 to 130 (GAGGA), 149 to 154 (NRTFSR), and methionine 213 each bind NADP(+). Tyrosine 215 contacts shikimate. Glycine 237 contacts NADP(+).

It belongs to the shikimate dehydrogenase family. In terms of assembly, homodimer.

The enzyme catalyses shikimate + NADP(+) = 3-dehydroshikimate + NADPH + H(+). It participates in metabolic intermediate biosynthesis; chorismate biosynthesis; chorismate from D-erythrose 4-phosphate and phosphoenolpyruvate: step 4/7. Functionally, involved in the biosynthesis of the chorismate, which leads to the biosynthesis of aromatic amino acids. Catalyzes the reversible NADPH linked reduction of 3-dehydroshikimate (DHSA) to yield shikimate (SA). The protein is Shikimate dehydrogenase (NADP(+)) of Photorhabdus laumondii subsp. laumondii (strain DSM 15139 / CIP 105565 / TT01) (Photorhabdus luminescens subsp. laumondii).